The following is a 293-amino-acid chain: Aspartate carbamoyltransferase catalytic subunit (293 aa).

2 residues coordinate carbamoyl phosphate: R50 and T51. K78 lines the L-aspartate pocket. Positions 100, 127, and 130 each coordinate carbamoyl phosphate. Residues R160 and R210 each contribute to the L-aspartate site. 2 residues coordinate carbamoyl phosphate: A253 and P254.

It belongs to the aspartate/ornithine carbamoyltransferase superfamily. ATCase family. In terms of assembly, heterododecamer (2C3:3R2) of six catalytic PyrB chains organized as two trimers (C3), and six regulatory PyrI chains organized as three dimers (R2).

It catalyses the reaction carbamoyl phosphate + L-aspartate = N-carbamoyl-L-aspartate + phosphate + H(+). Its pathway is pyrimidine metabolism; UMP biosynthesis via de novo pathway; (S)-dihydroorotate from bicarbonate: step 2/3. Catalyzes the condensation of carbamoyl phosphate and aspartate to form carbamoyl aspartate and inorganic phosphate, the committed step in the de novo pyrimidine nucleotide biosynthesis pathway. In Staphylococcus aureus (strain USA300), this protein is Aspartate carbamoyltransferase catalytic subunit.